The sequence spans 558 residues: Cytochrome c oxidase subunit 1-beta (558 aa).

The Cytoplasmic segment spans residues 1-28 (MADAAVHGHGDHHDTRGFFTRWFMSTNH). A helical transmembrane segment spans residues 29–59 (KDIGILYLFTAGIVGLISVCFTVYMRMELQH). The Periplasmic portion of the chain corresponds to 60–82 (PGVQYMCLEGARLIADASAECTP). Cysteines 66 and 80 form a disulfide. A helical transmembrane segment spans residues 83–120 (NGHLWNVMITYHGVLMMFFVVIPALFGGFGNYFMPLHI). Residue histidine 94 coordinates Fe(II)-heme a. The Cytoplasmic segment spans residues 121–126 (GAPDMA). A helical membrane pass occupies residues 127–151 (FPRLNNLSYWMYVCGVALGVASLLA). The Periplasmic portion of the chain corresponds to 152–176 (PGGNDQMGSGVGWVLYPPLSTTEAG). Residues 177–206 (YSMDLAIFAVHVSGASSILGAINIITTFLN) form a helical membrane-spanning segment. The Cytoplasmic portion of the chain corresponds to 207 to 217 (MRAPGMTLFKV). Residues 218–251 (PLFAWSVFITAWLILLSLPVLAGAITMLLMDRNF) form a helical membrane-spanning segment. At 252–262 (GTQFFDPAGGG) the chain is on the periplasmic side. Residues 263–299 (DPVLYQHILWFFGHPEVYIIILPGFGIISHVISTFAK) form a helical membrane-spanning segment. Residues histidine 276 and tyrosine 280 each contribute to the Cu cation site. Residues 276-280 (HPEVY) constitute a cross-link (1'-histidyl-3'-tyrosine (His-Tyr)). Residues 300–303 (KPIF) lie on the Cytoplasmic side of the membrane. The chain crosses the membrane as a helical span at residues 304–331 (GYLPMVLAMAAIGILGFVVWAHHMYTAG). Cu cation is bound by residues histidine 325 and histidine 326. Residue methionine 332 is a topological domain, periplasmic. The helical transmembrane segment at 333-364 (SLTQQAYFMLATMTIAVPTGIKVFSWIATMWG) threads the bilayer. At 365 to 369 (GSIEF) the chain is on the cytoplasmic side. The helical transmembrane segment at 370–395 (KTPMLWAFGFLFLFTVGGVTGVVLSQ) threads the bilayer. The Periplasmic segment spans residues 396-404 (APLDRVYHD). The helical transmembrane segment at 405 to 437 (TYYVVAHFHYVMSLGAVFGIFAGVYYWIGKMSG) threads the bilayer. Heme a3 is bound at residue histidine 411. Histidine 413 is a binding site for Fe(II)-heme a. The Cytoplasmic segment spans residues 438-440 (RQY). A helical membrane pass occupies residues 441-469 (PEWAGQLHFWMMFIGSNLIFFPQHFLGRQ). At 470-478 (GMPRRYIDY) the chain is on the periplasmic side. The chain crosses the membrane as a helical span at residues 479–514 (PVEFAYWNNISSIGAYISFASFLFFIGIVFYTLFAG). At 515–558 (KRVNVPNYWNEHADTLEWTLPSPPPEHTFETLPKREDWDRAHAH) the chain is on the cytoplasmic side.

The protein belongs to the heme-copper respiratory oxidase family. The cofactor is Cu(2+). Requires heme as cofactor. Post-translationally, his-276 and Tyr-280 are involved in the formation of a copper-coordinated covalent cross-link at the active site of the catalytic subunit I.

It is found in the cell inner membrane. The catalysed reaction is 4 Fe(II)-[cytochrome c] + O2 + 8 H(+)(in) = 4 Fe(III)-[cytochrome c] + 2 H2O + 4 H(+)(out). The protein operates within energy metabolism; oxidative phosphorylation. Functionally, subunit I and II form the functional core of the enzyme complex. Electrons originating in cytochrome c are transferred via heme a and Cu(A) to the binuclear center formed by heme a3 and Cu(B). This cytochrome c oxidase shows proton pump activity across the membrane in addition to the electron transfer. The sequence is that of Cytochrome c oxidase subunit 1-beta (ctaDII) from Paracoccus denitrificans.